The primary structure comprises 360 residues: Photosystem II protein D1 (360 aa).

A run of 3 helical transmembrane segments spans residues 29 to 46 (YIGW…TATS), 118 to 133 (HFLL…EWEL), and 142 to 156 (WIFV…AASA). H118 contacts chlorophyll a. Y126 contributes to the pheophytin a binding site. Positions 170 and 189 each coordinate [CaMn4O5] cluster. Residues 197-218 (FHMAGVAGVFGGSLFSAMHGSL) form a helical membrane-spanning segment. H198 contacts chlorophyll a. Residues H215 and 264–265 (SF) contribute to the a quinone site. Position 215 (H215) interacts with Fe cation. A Fe cation-binding site is contributed by H272. The helical transmembrane segment at 274 to 288 (FLAAWPVVGIWLTAM) threads the bilayer. Positions 332, 333, 342, and 344 each coordinate [CaMn4O5] cluster. The propeptide occupies 345–360 (SGDVLPVALNAPAVNG).

It belongs to the reaction center PufL/M/PsbA/D family. PSII is composed of 1 copy each of membrane proteins PsbA, PsbB, PsbC, PsbD, PsbE, PsbF, PsbH, PsbI, PsbJ, PsbK, PsbL, PsbM, PsbT, PsbX, PsbY, PsbZ, Psb30/Ycf12, at least 3 peripheral proteins of the oxygen-evolving complex and a large number of cofactors. It forms dimeric complexes. The D1/D2 heterodimer binds P680, chlorophylls that are the primary electron donor of PSII, and subsequent electron acceptors. It shares a non-heme iron and each subunit binds pheophytin, quinone, additional chlorophylls, carotenoids and lipids. D1 provides most of the ligands for the Mn4-Ca-O5 cluster of the oxygen-evolving complex (OEC). There is also a Cl(-1) ion associated with D1 and D2, which is required for oxygen evolution. The PSII complex binds additional chlorophylls, carotenoids and specific lipids. serves as cofactor. In terms of processing, tyr-161 forms a radical intermediate that is referred to as redox-active TyrZ, YZ or Y-Z. Post-translationally, C-terminally processed by CTPA; processing is essential to allow assembly of the oxygen-evolving complex and thus photosynthetic growth.

It is found in the plastid. The protein localises to the chloroplast thylakoid membrane. The enzyme catalyses 2 a plastoquinone + 4 hnu + 2 H2O = 2 a plastoquinol + O2. Functionally, photosystem II (PSII) is a light-driven water:plastoquinone oxidoreductase that uses light energy to abstract electrons from H(2)O, generating O(2) and a proton gradient subsequently used for ATP formation. It consists of a core antenna complex that captures photons, and an electron transfer chain that converts photonic excitation into a charge separation. The D1/D2 (PsbA/PsbD) reaction center heterodimer binds P680, the primary electron donor of PSII as well as several subsequent electron acceptors. The protein is Photosystem II protein D1 of Trieres chinensis (Marine centric diatom).